A 244-amino-acid chain; its full sequence is Probable transcriptional regulatory protein XfasM23_0940 (244 aa).

It belongs to the TACO1 family.

The protein resides in the cytoplasm. The sequence is that of Probable transcriptional regulatory protein XfasM23_0940 from Xylella fastidiosa (strain M23).